Consider the following 151-residue polypeptide: Large ribosomal subunit protein uL22 (151 aa).

Residues 1–18 are compositionally biased toward polar residues; sequence MARINYSINGDPETTSKA. Residues 1–23 form a disordered region; that stretch reads MARINYSINGDPETTSKAMGSEL.

The protein belongs to the universal ribosomal protein uL22 family. Part of the 50S ribosomal subunit.

Its function is as follows. This protein binds specifically to 23S rRNA. It makes multiple contacts with different domains of the 23S rRNA in the assembled 50S subunit and ribosome. In terms of biological role, the globular domain of the protein is located near the polypeptide exit tunnel on the outside of the subunit, while an extended beta-hairpin is found that lines the wall of the exit tunnel in the center of the 70S ribosome. In Methanosarcina acetivorans (strain ATCC 35395 / DSM 2834 / JCM 12185 / C2A), this protein is Large ribosomal subunit protein uL22.